The following is a 206-amino-acid chain: Endoribonuclease YbeY (206 aa).

Residues 1–20 form a disordered region; that stretch reads MSQANHNDTHNNIDDNINNH. Zn(2+)-binding residues include His-168, His-172, and His-178.

Belongs to the endoribonuclease YbeY family. The cofactor is Zn(2+).

It is found in the cytoplasm. Single strand-specific metallo-endoribonuclease involved in late-stage 70S ribosome quality control and in maturation of the 3' terminus of the 16S rRNA. The polypeptide is Endoribonuclease YbeY (Psychrobacter arcticus (strain DSM 17307 / VKM B-2377 / 273-4)).